The sequence spans 1100 residues: Exportin-T (1100 aa).

Belongs to the exportin family. As to quaternary structure, interacts with CEX1, GSP1, GSP2, NSP1, NUP2 and UTP8.

The protein resides in the nucleus. The protein localises to the cytoplasm. Functionally, tRNA nucleus export receptor which facilitates tRNA translocation across the nuclear pore complex. Preferentially interacts with tRNAs with mature 5'- and 3'-termini and does not distinguish between intron-containing and spliced tRNAs. In the nucleus binds to tRNA and to the Ran-GTPases GSP1 or GSP2 in their active GTP-bound form. Docking of this trimeric complex to the nuclear pore complex (NPC) is mediated through binding to nucleoporins. Upon transit of a nuclear export complex into the cytoplasm, disassembling of the complex and hydrolysis of Ran-GTP to Ran-GDP cause release of the tRNA from the export receptor. The directionality of nuclear export is thought to be conferred by an asymmetric distribution of the GTP- and GDP-bound forms of Ran between the cytoplasm and nucleus. The sequence is that of Exportin-T (LOS1) from Saccharomyces cerevisiae (strain ATCC 204508 / S288c) (Baker's yeast).